The chain runs to 384 residues: UDP-galactopyranose mutase (384 aa).

Positions 1–23 (MKSKKILIVGAGFSGAVIGRQLA) are cleaved as a signal peptide. Residues Ser-14, 33–34 (DQ), Asn-41, and 60–61 (HI) each bind FAD. UDP-alpha-D-galactose-binding residues include Asn-84, Phe-151, Thr-156, Trp-160, and Tyr-185. Phe-219 is an FAD binding site. 3 residues coordinate UDP-alpha-D-galactose: Asn-270, Arg-280, and Tyr-314. An FAD-binding site is contributed by Arg-343. UDP-alpha-D-galactose is bound at residue Tyr-349. An FAD-binding site is contributed by 350 to 355 (LDMDVT).

Belongs to the UDP-galactopyranose/dTDP-fucopyranose mutase family. Homodimer. FAD serves as cofactor.

The enzyme catalyses UDP-alpha-D-galactose = UDP-alpha-D-galactofuranose. It participates in bacterial outer membrane biogenesis; LPS O-antigen biosynthesis. Functionally, involved in the biosynthesis of the galactose-containing O-side-chain polysaccharide backbone structure of D-galactan I which is a key component of lipopolysaccharide (LPS). Catalyzes the interconversion through a 2-keto intermediate of uridine diphosphogalactopyranose (UDP-GalP) into uridine diphosphogalactofuranose (UDP-GalF) which is the biosynthetic precursor of galactofuranosyl residues. This Klebsiella pneumoniae protein is UDP-galactopyranose mutase (rfbD).